Consider the following 702-residue polypeptide: Polyribonucleotide nucleotidyltransferase (702 aa).

Residues aspartate 486 and aspartate 492 each coordinate Mg(2+). A KH domain is found at 553–612 (PSMATIKIDPEKIRDVIGKGGATIRSITEQTGASIDLDDDGTVRIYAADKASSDAALLKI). Positions 622–690 (DKLYKGKVVR…ARGRIKLSMK (69 aa)) constitute an S1 motif domain.

This sequence belongs to the polyribonucleotide nucleotidyltransferase family. Component of the RNA degradosome, which is a multiprotein complex involved in RNA processing and mRNA degradation. Requires Mg(2+) as cofactor.

The protein resides in the cytoplasm. It carries out the reaction RNA(n+1) + phosphate = RNA(n) + a ribonucleoside 5'-diphosphate. Involved in mRNA degradation. Catalyzes the phosphorolysis of single-stranded polyribonucleotides processively in the 3'- to 5'-direction. The sequence is that of Polyribonucleotide nucleotidyltransferase from Marinomonas sp. (strain MWYL1).